Consider the following 429-residue polypeptide: Apolipoprotein A-IV (429 aa).

Positions 1–20 are cleaved as a signal peptide; the sequence is MFLKAVVLTLALVAVTGARA. 13 tandem repeats follow at residues 33–54, 60–81, 82–103, 115–136, 137–158, 159–180, 181–202, 203–224, 225–246, 247–268, 269–286, 287–308, and 309–330. The segment at 33-330 is 13 X 22 AA approximate tandem repeats; sequence DYFSQLSSNA…QMEQLRQKLG (298 aa). Residues 359–429 form a disordered region; sequence KEKESQDNTL…QVQMLAPLES (71 aa). The span at 381 to 420 shows a compositional bias: low complexity; the sequence is QEQQQEQEQEQQQQQEQQQQQEQQREQQQQEQQQEQQQEQ.

Belongs to the apolipoprotein A1/A4/E family. As to quaternary structure, homodimer. In terms of processing, phosphorylation sites are present in the extracellular medium. Secreted in plasma.

Its subcellular location is the secreted. Functionally, may have a role in chylomicrons and VLDL secretion and catabolism. Required for efficient activation of lipoprotein lipase by ApoC-II; potent activator of LCAT. Apoa-IV is a major component of HDL and chylomicrons. This chain is Apolipoprotein A-IV (APOA4), found in Macaca fascicularis (Crab-eating macaque).